We begin with the raw amino-acid sequence, 181 residues long: Oligoribonuclease (181 aa).

Residues 8 to 171 (LIWIDLEMTG…DDIRESVAEL (164 aa)) enclose the Exonuclease domain. Residue Tyr129 is part of the active site.

This sequence belongs to the oligoribonuclease family.

It localises to the cytoplasm. Its function is as follows. 3'-to-5' exoribonuclease specific for small oligoribonucleotides. The polypeptide is Oligoribonuclease (Salmonella choleraesuis (strain SC-B67)).